We begin with the raw amino-acid sequence, 793 residues long: Protein PAT1 homolog (793 aa).

Phosphoserine occurs at positions 200 and 208. Disordered stretches follow at residues 203-256 and 292-312; these read PPGS…TGNR and MLQQPPHQNGLMPPQMQGSQN. Polar residues predominate over residues 219 to 242; that stretch reads PYQSGGPQMGSPNFSPFPNLQPQL. 2 positions are modified to phosphoserine: S342 and S343. Positions 476–501 are disordered; it reads RPLLEVDPPNSAKFGNAEHKPTDKPL. Residues 491-501 show a composition bias toward basic and acidic residues; that stretch reads NAEHKPTDKPL.

As to quaternary structure, interacts with MPK4 and SUMM2. Post-translationally, phosphorylated at Ser-208 by MPK4 upon flg22 elicitation. Phosphorylated at Ser-200, Ser-342 and Ser-343 upon flg22 elicitation.

Its subcellular location is the cytoplasm. It is found in the P-body. In terms of biological role, activator of mRNA decapping. Involved in mRNA decay via decapping. Involved in disease resistance in response to biotrophic and necrotrophic pathogens. Is part of a signaling pathway including MPK4 and the disease resistance protein SUMM2. The protein is Protein PAT1 homolog of Arabidopsis thaliana (Mouse-ear cress).